We begin with the raw amino-acid sequence, 415 residues long: Extracellular signal-regulated kinase 1 (415 aa).

The Protein kinase domain maps to 66–369 (YQILEIVGEG…VEDALKHPYL (304 aa)). Residues 72–80 (VGEGAYGIV) and lysine 95 contribute to the ATP site. Aspartate 190 functions as the Proton acceptor in the catalytic mechanism. Threonine 226 is modified (phosphothreonine). The short motif at 226 to 228 (TEY) is the TXY element. Tyrosine 228 is modified (phosphotyrosine).

This sequence belongs to the protein kinase superfamily. CMGC Ser/Thr protein kinase family. MAP kinase subfamily. Mg(2+) serves as cofactor. Post-translationally, dually phosphorylated on Thr-226 and Tyr-228, which activates the enzyme.

It catalyses the reaction L-seryl-[protein] + ATP = O-phospho-L-seryl-[protein] + ADP + H(+). The enzyme catalyses L-threonyl-[protein] + ATP = O-phospho-L-threonyl-[protein] + ADP + H(+). Activated by tyrosine and threonine phosphorylation. The polypeptide is Extracellular signal-regulated kinase 1 (CEK1) (Candida albicans (strain WO-1) (Yeast)).